We begin with the raw amino-acid sequence, 87 residues long: Putative defensin-like protein 84 (87 aa).

A signal peptide spans 1–27 (MTTKMVSSHRLLTLMVFALLLIPMISG). Cystine bridges form between Cys-32–Cys-73, Cys-36–Cys-54, Cys-42–Cys-71, and Cys-46–Cys-72.

Belongs to the DEFL family.

The protein resides in the secreted. This chain is Putative defensin-like protein 84, found in Arabidopsis thaliana (Mouse-ear cress).